Consider the following 513-residue polypeptide: Solute carrier family 2, facilitated glucose transporter member 10 (513 aa).

Residues 1 to 6 are Cytoplasmic-facing; the sequence is MGCSVL. The helical transmembrane segment at 7 to 27 threads the bilayer; the sequence is LLTITVSTLGGLVFGYELGII. Over 28–46 the chain is Extracellular; the sequence is SGALPQLQTHFSLGCVQQE. A helical transmembrane segment spans residues 47–67; that stretch reads AVVSALLIGSLFASIIGGWLI. Residues 68 to 80 are Cytoplasmic-facing; it reads DRHGRRTSILLSN. A helical transmembrane segment spans residues 81 to 101; that stretch reads LLILAGSVILTTGTSFFALVI. At 102–104 the chain is on the extracellular side; that stretch reads GRA. Residues 105–125 traverse the membrane as a helical segment; sequence VIGFAMTVSSMSCCIFVSEMV. The Cytoplasmic portion of the chain corresponds to 126–130; it reads TPERR. A helical transmembrane segment spans residues 131–151; that stretch reads GLMVTLYEVGITVGILIAYAV. At 152-164 the chain is on the extracellular side; sequence NYIFNNVPLTGWR. Residues 165–185 traverse the membrane as a helical segment; that stretch reads YMFGFAIIPSLIQLASIVLLP. The Cytoplasmic portion of the chain corresponds to 186–236; sequence KQAEVFVIHDDDSRQADRLTEETETSNQHQQSEKYGVSDLFKSKDNMRRRT. The helical transmembrane segment at 237-257 threads the bilayer; the sequence is VIGVGLVLSQQFTGQPNVLFY. Position 246-247 (246-247) interacts with D-glucose; the sequence is QQ. The Extracellular segment spans residues 258–272; that stretch reads ASTILFSVGFQSNAS. A glycan (N-linked (GlcNAc...) asparagine) is linked at Asn270. A helical membrane pass occupies residues 273 to 293; it reads AILASVGFGIVKVIATLLAML. Residues 294–301 lie on the Cytoplasmic side of the membrane; it reads CSDRAGRR. A helical transmembrane segment spans residues 302–322; the sequence is SLLIGGCSMLAVGLILTGFLC. Topologically, residues 323–376 are extracellular; it reads RQSVIDTTKRCTSVGPHSNLTLSAEHDEGVGFSSQTLDVHEHLRSFSQSEDIYK. Asn341 carries an N-linked (GlcNAc...) asparagine glycan. A helical transmembrane segment spans residues 377-397; that stretch reads WIIFTCLMAVVSAFSVSFGPM. Residues 398-422 are Cytoplasmic-facing; it reads TWVVLSEIFPKDIRGRAFSFINCFN. Trp399 is a binding site for D-glucose. The next 2 membrane-spanning stretches (helical) occupy residues 423-443 and 444-464; these read VGANLIVSFSFLSIIDVIGLS and GVFLMYGVVGIAGVVFIYLVL. Over 465-513 the chain is Cytoplasmic; the sequence is PETKGKSLQDIDRELSQTRMIHRQELCSIFQRRRFSPGYQRVQLTSTAT.

Belongs to the major facilitator superfamily. Sugar transporter (TC 2.A.1.1) family. Glucose transporter subfamily.

The protein localises to the endomembrane system. It localises to the cytoplasm. Its subcellular location is the perinuclear region. It carries out the reaction D-glucose(out) = D-glucose(in). Functionally, facilitative glucose transporter required for the development of the cardiovascular system. The chain is Solute carrier family 2, facilitated glucose transporter member 10 from Danio rerio (Zebrafish).